A 464-amino-acid chain; its full sequence is AAC-rich mRNA clone AAC11 protein (464 aa).

A compositionally biased stretch (polar residues) spans 1–15 (MSTPTLPNLSQLHGI). Disordered regions lie at residues 1-112 (MSTP…HGTN) and 125-464 (SLPQ…SFFH). 3 stretches are compositionally biased toward low complexity: residues 16 to 65 (QNQS…QQPQ), 78 to 88 (NPNGLGLMGHN), and 130 to 160 (INNN…NNSN). A compositionally biased stretch (polar residues) spans 161 to 174 (LGINSSPTQSSANS). 3 consecutive DNA-binding regions (a.T hook) follow at residues 177 to 189 (KRSR…NPPS), 198 to 210 (KRKR…MDEE), and 224 to 236 (NKKR…PKDE). Residues 240–253 (DYNNTSFSDSNTDG) are compositionally biased toward polar residues. A DNA-binding region (a.T hook 4) is located at residues 255–267 (PKKRGRPPKAKGD). Residues 276-428 (NTLGNGILNS…NNAGNLGNLG (153 aa)) show a composition bias toward low complexity. Polar residues predominate over residues 433–464 (LHSSDPNNPNAQKSFPDSTNTMDFQPNFSFFH).

The chain is AAC-rich mRNA clone AAC11 protein (AAC11) from Dictyostelium discoideum (Social amoeba).